The sequence spans 244 residues: uncharacterized protein (244 aa).

The HTH gntR-type domain maps to 12-80 (VALWRQIADR…QGRGTMIERK (69 aa)). The H-T-H motif DNA-binding region spans 40–59 (ETALAAEFGVNRHTVRSALA).

This is an uncharacterized protein from Rhizobium meliloti (strain 1021) (Ensifer meliloti).